Reading from the N-terminus, the 165-residue chain is Leukotoxin-activating lysine-acyltransferase LktC (165 aa).

Residues His22 and Asp91 contribute to the active site.

Belongs to the RTX toxin acyltransferase family.

The protein resides in the cytoplasm. It catalyses the reaction a fatty acyl-[ACP] + L-lysyl-[protein] = N(6)-(fatty acyl)-L-lysyl-[protein] + holo-[ACP] + H(+). Its function is as follows. Involved in fatty acylation of the protoxin (LktA) at two internal lysine residues, thereby converting it to the active toxin. The sequence is that of Leukotoxin-activating lysine-acyltransferase LktC (lktC) from Pasteurella haemolytica-like sp. (strain 5943B).